The following is a 417-amino-acid chain: Gamma-glutamyl phosphate reductase (417 aa).

This sequence belongs to the gamma-glutamyl phosphate reductase family.

The protein resides in the cytoplasm. The catalysed reaction is L-glutamate 5-semialdehyde + phosphate + NADP(+) = L-glutamyl 5-phosphate + NADPH + H(+). Its pathway is amino-acid biosynthesis; L-proline biosynthesis; L-glutamate 5-semialdehyde from L-glutamate: step 2/2. Its function is as follows. Catalyzes the NADPH-dependent reduction of L-glutamate 5-phosphate into L-glutamate 5-semialdehyde and phosphate. The product spontaneously undergoes cyclization to form 1-pyrroline-5-carboxylate. The chain is Gamma-glutamyl phosphate reductase from Hydrogenovibrio crunogenus (strain DSM 25203 / XCL-2) (Thiomicrospira crunogena).